Reading from the N-terminus, the 214-residue chain is Ras-related protein Rab-11A (214 aa).

Residues 20–28, 39–45, 68–72, 126–129, and 156–158 each bind GTP; these read GDSGVGKSN, SLETKST, DTAGQ, NKSD, and SAL. Residues 42–50 carry the Effector region motif; it reads TKSTIGVEF. Residues Cys-213 and Cys-214 are each lipidated (S-geranylgeranyl cysteine).

This sequence belongs to the small GTPase superfamily. Rab family.

Its subcellular location is the contractile vacuole membrane. Functionally, required for normal contractile vacuole structure and function. Cells expressing a dominant negative rab11A exhibit a more extensive contractile vacuole network and enlarged contractile vacuole bladders. These cells exhibit a functional defect in osmotic regulation where cells immersed in water become rounded and detach from the surface, and contain swollen contractile vacuoles. This chain is Ras-related protein Rab-11A (rab11A), found in Dictyostelium discoideum (Social amoeba).